We begin with the raw amino-acid sequence, 444 residues long: Adenylyltransferase and sulfurtransferase UBA4 (444 aa).

ATP is bound by residues Gly81, Asp102, 109 to 113 (SNLHR), Lys126, and 170 to 171 (DT). The Zn(2+) site is built by Cys212 and Cys215. The active-site Glycyl thioester intermediate; for adenylyltransferase activity is the Cys229. Residues Cys290 and Cys293 each contribute to the Zn(2+) site. A Rhodanese domain is found at 343–442 (KTKPYVLLDV…YIDEINPSLP (100 aa)). The Cysteine persulfide intermediate; for sulfurtransferase activity role is filled by Cys401.

In the N-terminal section; belongs to the HesA/MoeB/ThiF family. UBA4 subfamily. Zn(2+) is required as a cofactor.

The protein localises to the cytoplasm. It localises to the cytosol. It functions in the pathway tRNA modification; 5-methoxycarbonylmethyl-2-thiouridine-tRNA biosynthesis. In terms of biological role, plays a central role in 2-thiolation of mcm(5)S(2)U at tRNA wobble positions of cytosolic tRNA(Lys), tRNA(Glu) and tRNA(Gln). Acts by mediating the C-terminal thiocarboxylation of sulfur carrier URM1. Its N-terminus first activates URM1 as acyl-adenylate (-COAMP), then the persulfide sulfur on the catalytic cysteine is transferred to URM1 to form thiocarboxylation (-COSH) of its C-terminus. The reaction probably involves hydrogen sulfide that is generated from the persulfide intermediate and that acts as a nucleophile towards URM1. Subsequently, a transient disulfide bond is formed. Does not use thiosulfate as sulfur donor; NFS1 probably acting as a sulfur donor for thiocarboxylation reactions. Prior mcm(5) tRNA modification by the elongator complex is required for 2-thiolation. May also be involved in protein urmylation. This Kluyveromyces lactis (strain ATCC 8585 / CBS 2359 / DSM 70799 / NBRC 1267 / NRRL Y-1140 / WM37) (Yeast) protein is Adenylyltransferase and sulfurtransferase UBA4.